Consider the following 288-residue polypeptide: Bifunctional protein FolD (288 aa).

NADP(+)-binding positions include 166–168 (GAS) and isoleucine 232.

The protein belongs to the tetrahydrofolate dehydrogenase/cyclohydrolase family. In terms of assembly, homodimer.

It carries out the reaction (6R)-5,10-methylene-5,6,7,8-tetrahydrofolate + NADP(+) = (6R)-5,10-methenyltetrahydrofolate + NADPH. The catalysed reaction is (6R)-5,10-methenyltetrahydrofolate + H2O = (6R)-10-formyltetrahydrofolate + H(+). It functions in the pathway one-carbon metabolism; tetrahydrofolate interconversion. Its function is as follows. Catalyzes the oxidation of 5,10-methylenetetrahydrofolate to 5,10-methenyltetrahydrofolate and then the hydrolysis of 5,10-methenyltetrahydrofolate to 10-formyltetrahydrofolate. This chain is Bifunctional protein FolD, found in Yersinia pseudotuberculosis serotype O:1b (strain IP 31758).